Here is a 365-residue protein sequence, read N- to C-terminus: Eukaryotic translation initiation factor 3 subunit H (365 aa).

Positions 11–160 (VQVEALVVMK…LRAFRLSPQF (150 aa)) constitute an MPN domain. The stretch at 273–303 (YQRSLAREQTKIAAWQAKRKAENATRAQLKQ) forms a coiled coil.

The protein belongs to the eIF-3 subunit H family. Component of the eukaryotic translation initiation factor 3 (eIF-3) complex.

It is found in the cytoplasm. Component of the eukaryotic translation initiation factor 3 (eIF-3) complex, which is involved in protein synthesis of a specialized repertoire of mRNAs and, together with other initiation factors, stimulates binding of mRNA and methionyl-tRNAi to the 40S ribosome. The eIF-3 complex specifically targets and initiates translation of a subset of mRNAs involved in cell proliferation. This Coccidioides immitis (strain RS) (Valley fever fungus) protein is Eukaryotic translation initiation factor 3 subunit H.